The primary structure comprises 153 residues: 3-hydroxyacyl-[acyl-carrier-protein] dehydratase FabZ (153 aa).

Residue His-54 is part of the active site.

This sequence belongs to the thioester dehydratase family. FabZ subfamily.

It localises to the cytoplasm. The catalysed reaction is a (3R)-hydroxyacyl-[ACP] = a (2E)-enoyl-[ACP] + H2O. Functionally, involved in unsaturated fatty acids biosynthesis. Catalyzes the dehydration of short chain beta-hydroxyacyl-ACPs and long chain saturated and unsaturated beta-hydroxyacyl-ACPs. The chain is 3-hydroxyacyl-[acyl-carrier-protein] dehydratase FabZ from Shewanella sediminis (strain HAW-EB3).